The sequence spans 241 residues: UDP-2,3-diacylglucosamine hydrolase (241 aa).

Residues D8, H10, D41, N78, and H113 each contribute to the Mn(2+) site. Substrate is bound at residue 78 to 79 (NR). Residues D121, S159, N163, K166, and H194 each coordinate substrate. Residues H194 and H196 each coordinate Mn(2+).

This sequence belongs to the LpxH family. Requires Mn(2+) as cofactor.

It localises to the cell inner membrane. The catalysed reaction is UDP-2-N,3-O-bis[(3R)-3-hydroxytetradecanoyl]-alpha-D-glucosamine + H2O = 2-N,3-O-bis[(3R)-3-hydroxytetradecanoyl]-alpha-D-glucosaminyl 1-phosphate + UMP + 2 H(+). Its pathway is glycolipid biosynthesis; lipid IV(A) biosynthesis; lipid IV(A) from (3R)-3-hydroxytetradecanoyl-[acyl-carrier-protein] and UDP-N-acetyl-alpha-D-glucosamine: step 4/6. In terms of biological role, hydrolyzes the pyrophosphate bond of UDP-2,3-diacylglucosamine to yield 2,3-diacylglucosamine 1-phosphate (lipid X) and UMP by catalyzing the attack of water at the alpha-P atom. Involved in the biosynthesis of lipid A, a phosphorylated glycolipid that anchors the lipopolysaccharide to the outer membrane of the cell. The protein is UDP-2,3-diacylglucosamine hydrolase of Shewanella putrefaciens (strain CN-32 / ATCC BAA-453).